The sequence spans 472 residues: ATP synthase subunit beta (472 aa).

Residue 156–163 (GGAGVGKT) coordinates ATP.

The protein belongs to the ATPase alpha/beta chains family. As to quaternary structure, F-type ATPases have 2 components, CF(1) - the catalytic core - and CF(0) - the membrane proton channel. CF(1) has five subunits: alpha(3), beta(3), gamma(1), delta(1), epsilon(1). CF(0) has three main subunits: a(1), b(2) and c(9-12). The alpha and beta chains form an alternating ring which encloses part of the gamma chain. CF(1) is attached to CF(0) by a central stalk formed by the gamma and epsilon chains, while a peripheral stalk is formed by the delta and b chains.

It localises to the cell membrane. The enzyme catalyses ATP + H2O + 4 H(+)(in) = ADP + phosphate + 5 H(+)(out). Its function is as follows. Produces ATP from ADP in the presence of a proton gradient across the membrane. The catalytic sites are hosted primarily by the beta subunits. This Symbiobacterium thermophilum (strain DSM 24528 / JCM 14929 / IAM 14863 / T) protein is ATP synthase subunit beta.